Here is a 327-residue protein sequence, read N- to C-terminus: DNA-directed RNA polymerase subunit alpha (327 aa).

The interval 1–233 (MVREKVKVST…NLFIPFLHVE (233 aa)) is alpha N-terminal domain (alpha-NTD). Residues 266–327 (EQGFQYIFID…KKILDILEKK (62 aa)) are alpha C-terminal domain (alpha-CTD).

It belongs to the RNA polymerase alpha chain family. As to quaternary structure, in plastids the minimal PEP RNA polymerase catalytic core is composed of four subunits: alpha, beta, beta', and beta''. When a (nuclear-encoded) sigma factor is associated with the core the holoenzyme is formed, which can initiate transcription.

It localises to the plastid. Its subcellular location is the chloroplast. The enzyme catalyses RNA(n) + a ribonucleoside 5'-triphosphate = RNA(n+1) + diphosphate. Functionally, DNA-dependent RNA polymerase catalyzes the transcription of DNA into RNA using the four ribonucleoside triphosphates as substrates. The sequence is that of DNA-directed RNA polymerase subunit alpha from Barbarea verna (Land cress).